The sequence spans 562 residues: Arginine--tRNA ligase (562 aa).

The 'HIGH' region signature appears at 122–132 (PNIAKPISMGH).

The protein belongs to the class-I aminoacyl-tRNA synthetase family. As to quaternary structure, monomer.

The protein resides in the cytoplasm. The enzyme catalyses tRNA(Arg) + L-arginine + ATP = L-arginyl-tRNA(Arg) + AMP + diphosphate. In Pediococcus pentosaceus (strain ATCC 25745 / CCUG 21536 / LMG 10740 / 183-1w), this protein is Arginine--tRNA ligase.